A 200-amino-acid polypeptide reads, in one-letter code: Adenylyl-sulfate kinase (200 aa).

36 to 43 is a binding site for ATP; that stretch reads GLSGSGKS. Residue S110 is the Phosphoserine intermediate of the active site.

This sequence belongs to the APS kinase family.

It catalyses the reaction adenosine 5'-phosphosulfate + ATP = 3'-phosphoadenylyl sulfate + ADP + H(+). It participates in sulfur metabolism; hydrogen sulfide biosynthesis; sulfite from sulfate: step 2/3. Functionally, catalyzes the synthesis of activated sulfate. This chain is Adenylyl-sulfate kinase, found in Clostridium acetobutylicum (strain ATCC 824 / DSM 792 / JCM 1419 / IAM 19013 / LMG 5710 / NBRC 13948 / NRRL B-527 / VKM B-1787 / 2291 / W).